Here is a 177-residue protein sequence, read N- to C-terminus: Putative rubredoxin (177 aa).

One can recognise a Rubredoxin-like domain in the interval 1–38 (MKICRICGYQIPEGEFNLLEDGWVCPRCGVGKEELQDS). Residues Cys-4, Cys-7, Cys-25, and Cys-28 each coordinate Fe cation.

This sequence belongs to the rubredoxin family. Fe(3+) is required as a cofactor.

This Methanothermobacter thermautotrophicus (strain ATCC 29096 / DSM 1053 / JCM 10044 / NBRC 100330 / Delta H) (Methanobacterium thermoautotrophicum) protein is Putative rubredoxin (rdxA).